A 145-amino-acid polypeptide reads, in one-letter code: Extracellular globin-2 (145 aa).

The region spanning Gln-3–His-145 is the Globin domain. Cys-4 and Cys-133 are oxidised to a cystine. Heme b is bound at residue His-96.

Belongs to the globin family. The extracellular hemoglobin of the earthworm consists of 12 subunits that have a hexagonal bilayer structure with a molecular weight near 3.8 million. Each one-twelfth subunit is composed primarily of disulfide linked trimers (chains A, B, and C) and monomers (chain D).

In Lumbricus terrestris (Common earthworm), this protein is Extracellular globin-2.